Here is a 1164-residue protein sequence, read N- to C-terminus: Phytochrome D (1164 aa).

The disordered stretch occupies residues 1–55 (MVSGGGSKTSGGEAASSGHRRSRHTSAAEQAQSSANKALRSQNQQPQNHGGGTES). A compositionally biased stretch (polar residues) spans 25–55 (TSAAEQAQSSANKALRSQNQQPQNHGGGTES). Positions 255-437 (DIKLLCDTVV…AFGLQLNMEL (183 aa)) constitute a GAF domain. Residue Cys-360 coordinates phytochromobilin. PAS domains are found at residues 656–727 (VARE…LKGD) and 790–861 (DYKA…MIVL). In terms of domain architecture, Histidine kinase spans 938 to 1157 (YIFQVIKNPL…LIVIELPVPL (220 aa)).

Belongs to the phytochrome family. In terms of assembly, homodimer. Post-translationally, contains one covalently linked phytochromobilin chromophore.

Regulatory photoreceptor which exists in two forms that are reversibly interconvertible by light: the Pr form that absorbs maximally in the red region of the spectrum and the Pfr form that absorbs maximally in the far-red region. Photoconversion of Pr to Pfr induces an array of morphogenic responses, whereas reconversion of Pfr to Pr cancels the induction of those responses. Pfr controls the expression of a number of nuclear genes including those encoding the small subunit of ribulose-bisphosphate carboxylase, chlorophyll A/B binding protein, protochlorophyllide reductase, rRNA, etc. It also controls the expression of its own gene(s) in a negative feedback fashion. The polypeptide is Phytochrome D (PHYD) (Arabidopsis thaliana (Mouse-ear cress)).